The chain runs to 103 residues: Cell division protein FtsB (103 aa).

Topologically, residues 1 to 3 (MGK) are cytoplasmic. A helical membrane pass occupies residues 4 to 21 (LTLLLLAILVWLQYSLWF). The Periplasmic portion of the chain corresponds to 22–103 (GKNGIHDYTR…RAQSAGQNNR (82 aa)). Residues 28-71 (DYTRVNDDVAALQATNAKLKARNDQLFAEIDDLNGGQEALEERA) adopt a coiled-coil conformation.

The protein belongs to the FtsB family. Part of a complex composed of FtsB, FtsL and FtsQ.

It is found in the cell inner membrane. Essential cell division protein. May link together the upstream cell division proteins, which are predominantly cytoplasmic, with the downstream cell division proteins, which are predominantly periplasmic. This Shigella flexneri serotype 5b (strain 8401) protein is Cell division protein FtsB.